Consider the following 457-residue polypeptide: tRNA modification GTPase MnmE (457 aa).

R22, E83, and R122 together coordinate (6S)-5-formyl-5,6,7,8-tetrahydrofolate. A TrmE-type G domain is found at 219 to 378; the sequence is GLATAIIGRP…LEEAIKALFF (160 aa). A K(+)-binding site is contributed by N229. GTP contacts are provided by residues 229–234, 248–254, and 273–276; these read NVGKSS, TDIAGTT, and DTAG. S233 contributes to the Mg(2+) binding site. T248, I250, and T253 together coordinate K(+). Mg(2+) is bound at residue T254. K457 is a binding site for (6S)-5-formyl-5,6,7,8-tetrahydrofolate.

This sequence belongs to the TRAFAC class TrmE-Era-EngA-EngB-Septin-like GTPase superfamily. TrmE GTPase family. As to quaternary structure, homodimer. Heterotetramer of two MnmE and two MnmG subunits. Requires K(+) as cofactor.

The protein resides in the cytoplasm. In terms of biological role, exhibits a very high intrinsic GTPase hydrolysis rate. Involved in the addition of a carboxymethylaminomethyl (cmnm) group at the wobble position (U34) of certain tRNAs, forming tRNA-cmnm(5)s(2)U34. This is tRNA modification GTPase MnmE from Listeria innocua serovar 6a (strain ATCC BAA-680 / CLIP 11262).